The following is a 469-amino-acid chain: Serine/threonine-protein kinase orb6 (469 aa).

The Protein kinase domain maps to 93-392 (FSTIKVIGKG…AIEIMQHPFF (300 aa)). ATP-binding positions include 99-107 (IGKGAFGEV) and Lys122. Asp216 (proton acceptor) is an active-site residue. The 75-residue stretch at 393–467 (TGIDWDHIRE…KKFNYLTMKG (75 aa)) folds into the AGC-kinase C-terminal domain.

It belongs to the protein kinase superfamily. Ser/Thr protein kinase family. In terms of assembly, interacts with mob2.

It carries out the reaction L-seryl-[protein] + ATP = O-phospho-L-seryl-[protein] + ADP + H(+). It catalyses the reaction L-threonyl-[protein] + ATP = O-phospho-L-threonyl-[protein] + ADP + H(+). Functionally, interacts with pak1/shk1 and coordinates cell morphogenesis with the cell cycle. It is essential for maintenance of cell polarity and is involved in mitotic control. The sequence is that of Serine/threonine-protein kinase orb6 (orb6) from Schizosaccharomyces pombe (strain 972 / ATCC 24843) (Fission yeast).